The sequence spans 215 residues: Cytochrome b6 (215 aa).

Residues 32–52 (IFYCLGGITLTCFLVQVATGF) traverse the membrane as a helical segment. Residue Cys-35 coordinates heme c. Residues His-86 and His-100 each coordinate heme b. Transmembrane regions (helical) follow at residues 90–110 (ASMMVLMMILHVFRVYLTGGF), 116–136 (LTWVTGVILAVLTVSFGVTGY), and 186–206 (LHTFILPFLTAVFMLMHFLMI). Residues His-187 and His-202 each contribute to the heme b site.

It belongs to the cytochrome b family. PetB subfamily. The 4 large subunits of the cytochrome b6-f complex are cytochrome b6, subunit IV (17 kDa polypeptide, PetD), cytochrome f and the Rieske protein, while the 4 small subunits are PetG, PetL, PetM and PetN. The complex functions as a dimer. Requires heme b as cofactor. It depends on heme c as a cofactor.

It is found in the plastid. The protein localises to the chloroplast thylakoid membrane. Its function is as follows. Component of the cytochrome b6-f complex, which mediates electron transfer between photosystem II (PSII) and photosystem I (PSI), cyclic electron flow around PSI, and state transitions. This is Cytochrome b6 from Welwitschia mirabilis (Tree tumbo).